A 191-amino-acid polypeptide reads, in one-letter code: Imidazoleglycerol-phosphate dehydratase (191 aa).

This sequence belongs to the imidazoleglycerol-phosphate dehydratase family.

The protein localises to the cytoplasm. The enzyme catalyses D-erythro-1-(imidazol-4-yl)glycerol 3-phosphate = 3-(imidazol-4-yl)-2-oxopropyl phosphate + H2O. The protein operates within amino-acid biosynthesis; L-histidine biosynthesis; L-histidine from 5-phospho-alpha-D-ribose 1-diphosphate: step 6/9. The sequence is that of Imidazoleglycerol-phosphate dehydratase from Thermodesulfovibrio yellowstonii (strain ATCC 51303 / DSM 11347 / YP87).